The primary structure comprises 246 residues: Probable transcriptional regulatory protein Dole_0371 (246 aa).

Belongs to the TACO1 family.

The protein localises to the cytoplasm. The protein is Probable transcriptional regulatory protein Dole_0371 of Desulfosudis oleivorans (strain DSM 6200 / JCM 39069 / Hxd3) (Desulfococcus oleovorans).